A 295-amino-acid chain; its full sequence is Ribosomal RNA small subunit methyltransferase A (295 aa).

S-adenosyl-L-methionine-binding residues include N25, L27, G52, E73, D98, and N120.

This sequence belongs to the class I-like SAM-binding methyltransferase superfamily. rRNA adenine N(6)-methyltransferase family. RsmA subfamily.

It is found in the cytoplasm. The enzyme catalyses adenosine(1518)/adenosine(1519) in 16S rRNA + 4 S-adenosyl-L-methionine = N(6)-dimethyladenosine(1518)/N(6)-dimethyladenosine(1519) in 16S rRNA + 4 S-adenosyl-L-homocysteine + 4 H(+). Specifically dimethylates two adjacent adenosines (A1518 and A1519) in the loop of a conserved hairpin near the 3'-end of 16S rRNA in the 30S particle. May play a critical role in biogenesis of 30S subunits. This chain is Ribosomal RNA small subunit methyltransferase A, found in Desulfotalea psychrophila (strain LSv54 / DSM 12343).